A 351-amino-acid chain; its full sequence is D-glucoside 3-dehydrogenase (351 aa).

Belongs to the Gfo/Idh/MocA family.

The enzyme catalyses a D-glucoside + NAD(+) = a 3-dehydro-D-glucoside + NADH + H(+). Catalyzes the NADH-dependent reduction of the oxo group at C3 of 3-dehydro-D-glucosides leading to D-glucosides. Probably functions in a metabolic pathway that transforms D-gulosides to D-glucosides. Can use 3-dehydro-D-glucose, methyl alpha-3-dehydro-D-glucoside and methyl beta-3-dehydro-D-glucoside as substrates in vitro. However, the actual specific physiological substrates for this metabolic pathway are unknown. To a lesser extent, is also able to catalyze the reverse reactions, i.e. the NAD(+)-dependent oxidation of the hydroxyl group at C3 of D-glucosides leading to 3-dehydro-D-glucosides. Cannot act on UDP-glucose, UDP-N-acetyl-D-glucosamine, D-glucosamine, N-acetyl-D-glucosamine, or UDP-D-galactose. The sequence is that of D-glucoside 3-dehydrogenase (ycjS) from Escherichia coli (strain K12).